Reading from the N-terminus, the 250-residue chain is 2,3-bisphosphoglycerate-dependent phosphoglycerate mutase (250 aa).

Substrate contacts are provided by residues 8 to 15, 21 to 22, Arg60, 87 to 90, Lys98, 114 to 115, and 183 to 184; these read RHGESQWN, TG, ERHY, RR, and GN. The Tele-phosphohistidine intermediate role is filled by His9. The active-site Proton donor/acceptor is the Glu87.

This sequence belongs to the phosphoglycerate mutase family. BPG-dependent PGAM subfamily. In terms of assembly, homodimer.

The catalysed reaction is (2R)-2-phosphoglycerate = (2R)-3-phosphoglycerate. Its pathway is carbohydrate degradation; glycolysis; pyruvate from D-glyceraldehyde 3-phosphate: step 3/5. In terms of biological role, catalyzes the interconversion of 2-phosphoglycerate and 3-phosphoglycerate. This Bordetella avium (strain 197N) protein is 2,3-bisphosphoglycerate-dependent phosphoglycerate mutase.